We begin with the raw amino-acid sequence, 93 residues long: Phosphoribosyl-ATP pyrophosphatase (93 aa).

This sequence belongs to the PRA-PH family.

The protein resides in the cytoplasm. The enzyme catalyses 1-(5-phospho-beta-D-ribosyl)-ATP + H2O = 1-(5-phospho-beta-D-ribosyl)-5'-AMP + diphosphate + H(+). The protein operates within amino-acid biosynthesis; L-histidine biosynthesis; L-histidine from 5-phospho-alpha-D-ribose 1-diphosphate: step 2/9. This is Phosphoribosyl-ATP pyrophosphatase from Corynebacterium aurimucosum (strain ATCC 700975 / DSM 44827 / CIP 107346 / CN-1) (Corynebacterium nigricans).